We begin with the raw amino-acid sequence, 456 residues long: MNTVRETIAAIATAQGRGGVGIVRLSGPLAAKAGLLITGRTLTPRHAHYGPFRDDEGLVLDEGIALFFPGPNSFTGEDVLELQGHGGPVVLDMLLQRCVQVGCRLARPGEFSERAFLNDKLDLAQAEAIADLIEASSSQAARNALRSLQGEFSRRVHSLTEALIALRIYVEAAIDFPEEEIDFLADGHVLSMLDAVRSELSTVQREAGQGALLRDGMTVVIAGRPNAGKSSLLNQLAGREAAIVTDIAGTTRDILREHIHIDGMPLHVVDTAGLRDTDDHVEKIGVERALKAIGEADRVLLVVDSTAPEASDPFALWPEFLAQRPDPAKVTLIRNKADLSGERVALEQCDDGHVTITLSAKGDDTGLQLLRDHLKGCMGYEQTAESGFSARRRHLDALRQASEHLEHGRAQLTLAGAGELLAEDLRQAQHALGEITGAFSSDDLLGRIFSSFCIGK.

Residues R24, E81, and K120 each coordinate (6S)-5-formyl-5,6,7,8-tetrahydrofolate. Residues 216 to 379 (GMTVVIAGRP…LRDHLKGCMG (164 aa)) form the TrmE-type G domain. Position 226 (N226) interacts with K(+). Residues 226–231 (NAGKSS), 245–251 (TDIAGTT), 270–273 (DTAG), and 335–338 (NKAD) contribute to the GTP site. Mg(2+) is bound at residue S230. K(+)-binding residues include T245, I247, and T250. Residue T251 participates in Mg(2+) binding. K456 serves as a coordination point for (6S)-5-formyl-5,6,7,8-tetrahydrofolate.

Belongs to the TRAFAC class TrmE-Era-EngA-EngB-Septin-like GTPase superfamily. TrmE GTPase family. As to quaternary structure, homodimer. Heterotetramer of two MnmE and two MnmG subunits. K(+) is required as a cofactor.

The protein localises to the cytoplasm. In terms of biological role, exhibits a very high intrinsic GTPase hydrolysis rate. Involved in the addition of a carboxymethylaminomethyl (cmnm) group at the wobble position (U34) of certain tRNAs, forming tRNA-cmnm(5)s(2)U34. This chain is tRNA modification GTPase MnmE, found in Pseudomonas putida (strain ATCC 47054 / DSM 6125 / CFBP 8728 / NCIMB 11950 / KT2440).